Consider the following 438-residue polypeptide: Coenzyme A disulfide reductase (438 aa).

An FAD-binding site is contributed by 8–33; it reads GAVAGGATCASQIRRLDKESEIIVFE. Substrate contacts are provided by threonine 15, glutamine 19, arginine 22, serine 39, and asparagine 42. Cysteine 43 acts as the Nucleophile in catalysis. Residue cysteine 43 is the Redox-active of the active site. A substrate-binding site is contributed by lysine 71. NADP(+) is bound at residue 151–166; sequence ALVVGAGYISLEVLEN. Residue 267–277 participates in FAD binding; it reads TNIPNIYALGD. Histidine 299 provides a ligand contact to substrate. Tyrosine 419 is a binding site for FAD. Lysine 427 contacts substrate.

It belongs to the class-III pyridine nucleotide-disulfide oxidoreductase family. As to quaternary structure, homodimer. FAD is required as a cofactor.

The catalysed reaction is NADP(+) + 2 CoA = CoA-disulfide + NADPH + H(+). Its function is as follows. Catalyzes specifically the NADPH-dependent reduction of coenzyme A disulfide. The chain is Coenzyme A disulfide reductase from Staphylococcus epidermidis (strain ATCC 35984 / DSM 28319 / BCRC 17069 / CCUG 31568 / BM 3577 / RP62A).